The sequence spans 205 residues: DNA-directed RNA polymerase RPB5 homolog (205 aa).

This sequence belongs to the archaeal RpoH/eukaryotic RPB5 RNA polymerase subunit family. In terms of assembly, part of the viral DNA-directed RNA polymerase that consists of 8 polII-like subunits (RPB1, RPB2, RPB3, RPB5, RPB6, RPB7, RPB9, RPB10), a capping enzyme and a termination factor.

It is found in the host cytoplasm. The protein localises to the virion. Component of the DNA-directed RNA polymerase (RNAP) that catalyzes the transcription in the cytoplasm of viral DNA into RNA using the four ribonucleoside triphosphates as substrates. In African swine fever virus (isolate Pig/Kenya/KEN-50/1950) (ASFV), this protein is DNA-directed RNA polymerase RPB5 homolog.